We begin with the raw amino-acid sequence, 284 residues long: MNLAGFEVGLDKPFFLIAGTCVVESEQMTIDTAGRLKEICATLGVPFIYKSSYDKANRSSGKSFRGLGMDEGLRILAEVKRQLNVPVLTDVHEIDEIAPVAAVVDVLQTPAFLCRQTDFIRACAQSGKPVNIKKGQFLAPHDMKNVIDKARDAARDAGLSEDRFMACERGVSFGYNNLVSDMRSLAIMRETGAPVVFDATHSVQLPGGQGTSSGGQREFVPVLARAALATGVAGLFMETHPNPAEAKSDGPNAVPLGRMAALLETLVTLDRAVKRVPFLENDFN.

The protein belongs to the KdsA family.

It is found in the cytoplasm. It carries out the reaction D-arabinose 5-phosphate + phosphoenolpyruvate + H2O = 3-deoxy-alpha-D-manno-2-octulosonate-8-phosphate + phosphate. It functions in the pathway carbohydrate biosynthesis; 3-deoxy-D-manno-octulosonate biosynthesis; 3-deoxy-D-manno-octulosonate from D-ribulose 5-phosphate: step 2/3. Its pathway is bacterial outer membrane biogenesis; lipopolysaccharide biosynthesis. The chain is 2-dehydro-3-deoxyphosphooctonate aldolase from Burkholderia mallei (strain NCTC 10247).